The chain runs to 150 residues: 6,7-dimethyl-8-ribityllumazine synthase (150 aa).

Residues phenylalanine 11, 43-45 (VYD), and 67-69 (AVI) each bind 5-amino-6-(D-ribitylamino)uracil. A (2S)-2-hydroxy-3-oxobutyl phosphate-binding site is contributed by 72 to 73 (AT). Histidine 75 (proton donor) is an active-site residue. Leucine 100 serves as a coordination point for 5-amino-6-(D-ribitylamino)uracil. Arginine 115 is a binding site for (2S)-2-hydroxy-3-oxobutyl phosphate.

Belongs to the DMRL synthase family.

It carries out the reaction (2S)-2-hydroxy-3-oxobutyl phosphate + 5-amino-6-(D-ribitylamino)uracil = 6,7-dimethyl-8-(1-D-ribityl)lumazine + phosphate + 2 H2O + H(+). Its pathway is cofactor biosynthesis; riboflavin biosynthesis; riboflavin from 2-hydroxy-3-oxobutyl phosphate and 5-amino-6-(D-ribitylamino)uracil: step 1/2. Its function is as follows. Catalyzes the formation of 6,7-dimethyl-8-ribityllumazine by condensation of 5-amino-6-(D-ribitylamino)uracil with 3,4-dihydroxy-2-butanone 4-phosphate. This is the penultimate step in the biosynthesis of riboflavin. This chain is 6,7-dimethyl-8-ribityllumazine synthase, found in Pyrobaculum neutrophilum (strain DSM 2338 / JCM 9278 / NBRC 100436 / V24Sta) (Thermoproteus neutrophilus).